Reading from the N-terminus, the 1372-residue chain is DNA-directed RNA polymerase subunit beta' (1372 aa).

Cys69, Cys71, Cys84, and Cys87 together coordinate Zn(2+). The Mg(2+) site is built by Asp460, Asp462, and Asp464. Residues Cys808, Cys882, Cys889, and Cys892 each coordinate Zn(2+).

Belongs to the RNA polymerase beta' chain family. As to quaternary structure, the RNAP catalytic core consists of 2 alpha, 1 beta, 1 beta' and 1 omega subunit. When a sigma factor is associated with the core the holoenzyme is formed, which can initiate transcription. The cofactor is Mg(2+). Zn(2+) is required as a cofactor.

It carries out the reaction RNA(n) + a ribonucleoside 5'-triphosphate = RNA(n+1) + diphosphate. Its function is as follows. DNA-dependent RNA polymerase catalyzes the transcription of DNA into RNA using the four ribonucleoside triphosphates as substrates. The chain is DNA-directed RNA polymerase subunit beta' from Rickettsia akari (strain Hartford).